Reading from the N-terminus, the 184-residue chain is UPF0397 protein SA2477 (184 aa).

5 consecutive transmembrane segments (helical) span residues 11–31, 44–64, 77–97, 111–131, and 148–168; these read VVAIGIGAAVFVILGRFVVIP, AFLALISAIFGPFAGLMTGLV, AWWSWVICSGIIGCLYGWIGL, MIYFNIGQIIANIICWALIAP, and QGVISAVLNIISVGIIGTILL.

Belongs to the UPF0397 family.

The protein resides in the cell membrane. The chain is UPF0397 protein SA2477 from Staphylococcus aureus (strain N315).